The following is a 170-amino-acid chain: Photosystem I assembly protein Ycf3 (170 aa).

TPR repeat units follow at residues 35–68 (AFTY…EIDP), 72–105 (SYIL…NPFL), and 120–153 (GEQA…TPGN).

This sequence belongs to the Ycf3 family.

It localises to the plastid. The protein localises to the chloroplast thylakoid membrane. Functionally, essential for the assembly of the photosystem I (PSI) complex. May act as a chaperone-like factor to guide the assembly of the PSI subunits. The sequence is that of Photosystem I assembly protein Ycf3 from Oryza nivara (Indian wild rice).